Here is a 329-residue protein sequence, read N- to C-terminus: Lipoyl synthase (329 aa).

[4Fe-4S] cluster is bound by residues cysteine 72, cysteine 77, cysteine 83, cysteine 98, cysteine 102, cysteine 105, and serine 313. Residues 83–303 (CWSHGTATIM…QIGLKKGFFE (221 aa)) enclose the Radical SAM core domain.

It belongs to the radical SAM superfamily. Lipoyl synthase family. It depends on [4Fe-4S] cluster as a cofactor.

Its subcellular location is the cytoplasm. It catalyses the reaction [[Fe-S] cluster scaffold protein carrying a second [4Fe-4S](2+) cluster] + N(6)-octanoyl-L-lysyl-[protein] + 2 oxidized [2Fe-2S]-[ferredoxin] + 2 S-adenosyl-L-methionine + 4 H(+) = [[Fe-S] cluster scaffold protein] + N(6)-[(R)-dihydrolipoyl]-L-lysyl-[protein] + 4 Fe(3+) + 2 hydrogen sulfide + 2 5'-deoxyadenosine + 2 L-methionine + 2 reduced [2Fe-2S]-[ferredoxin]. It participates in protein modification; protein lipoylation via endogenous pathway; protein N(6)-(lipoyl)lysine from octanoyl-[acyl-carrier-protein]: step 2/2. In terms of biological role, catalyzes the radical-mediated insertion of two sulfur atoms into the C-6 and C-8 positions of the octanoyl moiety bound to the lipoyl domains of lipoate-dependent enzymes, thereby converting the octanoylated domains into lipoylated derivatives. The sequence is that of Lipoyl synthase from Legionella pneumophila (strain Corby).